The sequence spans 258 residues: Flagellar brake protein YcgR (258 aa).

The 118-residue stretch at 131–248 (QKREYYRVAT…ALSLIQRYIT (118 aa)) folds into the PilZ domain.

Belongs to the YcgR family. In terms of assembly, monomer. Interacts with the flagellar basal bodies.

It is found in the bacterial flagellum basal body. Acts as a flagellar brake, regulating swimming and swarming in a bis-(3'-5') cyclic diguanylic acid (c-di-GMP)-dependent manner. Binds 1 c-di-GMP dimer per subunit. Increasing levels of c-di-GMP lead to decreased motility. In Nitrosospira multiformis (strain ATCC 25196 / NCIMB 11849 / C 71), this protein is Flagellar brake protein YcgR.